The chain runs to 398 residues: 4-hydroxy-3-methylbut-2-en-1-yl diphosphate synthase (ferredoxin) (398 aa).

C306, C309, C340, and E347 together coordinate [4Fe-4S] cluster.

Belongs to the IspG family. Requires [4Fe-4S] cluster as cofactor.

The catalysed reaction is (2E)-4-hydroxy-3-methylbut-2-enyl diphosphate + 2 oxidized [2Fe-2S]-[ferredoxin] + H2O = 2-C-methyl-D-erythritol 2,4-cyclic diphosphate + 2 reduced [2Fe-2S]-[ferredoxin] + H(+). The protein operates within isoprenoid biosynthesis; isopentenyl diphosphate biosynthesis via DXP pathway; isopentenyl diphosphate from 1-deoxy-D-xylulose 5-phosphate: step 5/6. Its function is as follows. Converts 2C-methyl-D-erythritol 2,4-cyclodiphosphate (ME-2,4cPP) into 1-hydroxy-2-methyl-2-(E)-butenyl 4-diphosphate. In Synechococcus sp. (strain CC9605), this protein is 4-hydroxy-3-methylbut-2-en-1-yl diphosphate synthase (ferredoxin).